We begin with the raw amino-acid sequence, 803 residues long: Carbon monoxide dehydrogenase large chain (803 aa).

At arginine 384 the chain carries 4-hydroxyarginine. Residue cysteine 385 coordinates Cu(+). Glutamate 757 contributes to the Mo-molybdopterin cytosine dinucleotide binding site.

Dimer of heterotrimers. Each heterotrimer consists of a large, a medium and a small subunit. It depends on Cu(+) as a cofactor. Requires Mo-molybdopterin cytosine dinucleotide as cofactor.

It catalyses the reaction CO + a quinone + H2O = a quinol + CO2. Catalyzes the oxidation of carbon monoxide to carbon dioxide. This Hydrogenophaga pseudoflava (Pseudomonas carboxydoflava) protein is Carbon monoxide dehydrogenase large chain (cutL).